We begin with the raw amino-acid sequence, 121 residues long: Somatostatin-1 (121 aa).

The N-terminal stretch at 1–24 is a signal peptide; sequence MKMVSSSRLRCLLVLLLSLTASIS. Residues 25 to 105 constitute a propeptide that is removed on maturation; sequence CSFAGQRDSK…SGGPLLAPRE (81 aa). Positions 76-99 are disordered; the sequence is NFPLAEGGPEDAHADLERAASGGP. A disulfide bond links Cys-110 and Cys-121.

This sequence belongs to the somatostatin family.

The protein resides in the secreted. Its function is as follows. Somatostatin inhibits the release of somatotropin. The sequence is that of Somatostatin-1 (sst1) from Lophius americanus (American angler).